Reading from the N-terminus, the 400-residue chain is F-box/LRR-repeat protein 14 (400 aa).

Positions 2 to 48 (ETHISCLFPELLAMIFGYLDVRDKGRAAQVCTAWRDAAYHKSVWRGV) constitute an F-box domain. Positions 2 to 48 (ETHISCLFPELLAMIFGYLDVRDKGRAAQVCTAWRDAAYHKSVWRGV) are required for down-regulation of SNAI1. 5 LRR repeats span residues 144–163 (GLEVLELGGCSNITNTGLLL), 170–191 (RLKSLNLRSCRHLSDVGIGHLA), 203–225 (GLEQLTLQDCQKLTDLSLKHISR), 229–250 (GLRLLNLSFCGGISDAGLLHLS), and 254–275 (SLRSLNLRSCDNISDTGIMHLA).

In terms of assembly, part of a SCF (SKP1-cullin-F-box) ubiquitin-protein ligase complex. Interacts with SKP1 and CUL1. Interacts with SNAI1; the interaction requires the phosphorylation of the two serine residues in the substrate destruction motif D-S-G-X(2,3,4)-S.

The protein resides in the cytoplasm. Substrate-recognition component of some SCF (SKP1-CUL1-F-box protein)-type E3 ubiquitin-protein ligase complexes. The SCF(FBXL14) complex acts by mediating ubiquitination and subsequent degradation of SNAI1. The chain is F-box/LRR-repeat protein 14 (FBXL14) from Bos taurus (Bovine).